A 203-amino-acid polypeptide reads, in one-letter code: Proteasome subunit beta 2 (203 aa).

The propeptide at 1–9 (MGEEVSIGA) is removed in mature form; by autocatalysis. T10 functions as the Nucleophile in the catalytic mechanism.

It belongs to the peptidase T1B family. In terms of assembly, the 20S proteasome core is composed of 14 alpha and 14 beta subunits that assemble into four stacked heptameric rings, resulting in a barrel-shaped structure. The two inner rings, each composed of seven catalytic beta subunits, are sandwiched by two outer rings, each composed of seven alpha subunits. The catalytic chamber with the active sites is on the inside of the barrel. Has a gated structure, the ends of the cylinder being occluded by the N-termini of the alpha-subunits. Is capped at one or both ends by the proteasome regulatory ATPase, PAN.

The protein localises to the cytoplasm. It carries out the reaction Cleavage of peptide bonds with very broad specificity.. Its activity is regulated as follows. The formation of the proteasomal ATPase PAN-20S proteasome complex, via the docking of the C-termini of PAN into the intersubunit pockets in the alpha-rings, triggers opening of the gate for substrate entry. Interconversion between the open-gate and close-gate conformations leads to a dynamic regulation of the 20S proteasome proteolysis activity. Its function is as follows. Component of the proteasome core, a large protease complex with broad specificity involved in protein degradation. In Pyrobaculum calidifontis (strain DSM 21063 / JCM 11548 / VA1), this protein is Proteasome subunit beta 2.